Consider the following 105-residue polypeptide: Small ribosomal subunit protein uS10 (105 aa).

It belongs to the universal ribosomal protein uS10 family. Part of the 30S ribosomal subunit.

Involved in the binding of tRNA to the ribosomes. The protein is Small ribosomal subunit protein uS10 of Synechococcus sp. (strain JA-2-3B'a(2-13)) (Cyanobacteria bacterium Yellowstone B-Prime).